The primary structure comprises 121 residues: Small ribosomal subunit protein bS6 (121 aa).

Belongs to the bacterial ribosomal protein bS6 family.

In terms of biological role, binds together with bS18 to 16S ribosomal RNA. This chain is Small ribosomal subunit protein bS6, found in Pelagibacter ubique (strain HTCC1062).